The chain runs to 191 residues: MSNINVIDILKESDALLEGHFLLSSGRHSNRYCQCAKLLQCPQKAEKVISVIAEKLKEVDFNIIVGPAMGGVIVSYELARQTNKPGIFAERKEEVMCIRRGFEIKKGDKVIISEDVVTTGKSSLEVAKVIEEMGGEVVGIACIVDRRAEDIKTNYPIYSACKLEIETYEKDNCELCKKNIPFVKPGSREQK.

114-122 (EDVVTTGKS) is a 5-phospho-alpha-D-ribose 1-diphosphate binding site. Orotate contacts are provided by Thr-118 and Arg-146.

It belongs to the purine/pyrimidine phosphoribosyltransferase family. PyrE subfamily. In terms of assembly, homodimer. The cofactor is Mg(2+).

The catalysed reaction is orotidine 5'-phosphate + diphosphate = orotate + 5-phospho-alpha-D-ribose 1-diphosphate. It functions in the pathway pyrimidine metabolism; UMP biosynthesis via de novo pathway; UMP from orotate: step 1/2. Functionally, catalyzes the transfer of a ribosyl phosphate group from 5-phosphoribose 1-diphosphate to orotate, leading to the formation of orotidine monophosphate (OMP). This Clostridium botulinum (strain Kyoto / Type A2) protein is Orotate phosphoribosyltransferase.